A 123-amino-acid chain; its full sequence is Small ribosomal subunit protein uS12c (123 aa).

The tract at residues 9–31 (RNKRQAAENKTKSPALQRSPQRR) is disordered.

This sequence belongs to the universal ribosomal protein uS12 family. As to quaternary structure, part of the 30S ribosomal subunit.

The protein resides in the plastid. Its subcellular location is the chloroplast. In terms of biological role, with S4 and S5 plays an important role in translational accuracy. Located at the interface of the 30S and 50S subunits. The chain is Small ribosomal subunit protein uS12c (rps12) from Spirogyra maxima (Green alga).